A 244-amino-acid chain; its full sequence is Phosphoadenosine 5'-phosphosulfate reductase (244 aa).

Residue Cys239 is the Nucleophile; cysteine thiosulfonate intermediate of the active site.

The protein belongs to the PAPS reductase family. CysH subfamily.

Its subcellular location is the cytoplasm. It carries out the reaction [thioredoxin]-disulfide + sulfite + adenosine 3',5'-bisphosphate + 2 H(+) = [thioredoxin]-dithiol + 3'-phosphoadenylyl sulfate. It functions in the pathway sulfur metabolism; hydrogen sulfide biosynthesis; sulfite from sulfate: step 3/3. Catalyzes the formation of sulfite from phosphoadenosine 5'-phosphosulfate (PAPS) using thioredoxin as an electron donor. The polypeptide is Phosphoadenosine 5'-phosphosulfate reductase (Salmonella paratyphi A (strain AKU_12601)).